Reading from the N-terminus, the 307-residue chain is MATKKIRCALIGSGNIGTDLIYKLKRSAVLEPVWMVGIDAASEGLQRARDLGLKTTAEGVDGLLPHVKADGIQIAFDATSAYVHPENSRKLNALGVLMVDLTPAAVGPLCVPPVNLREHAAKLEMNVNMISCAGQATIPIVYAVSRVQPVDYAEIVASLASKSIGPGTRANLDEFTYTTSDALVRVGGARRGKALAVINPAEPPMIMRNTINCLTDDEPQQARIIDSVLSMIEEVQQYVPGYKLVNGPVFDGRRVSVFMQVAGLGDYLPTYAGNLDIMTAAACRTAEMFAEEILAGTLQLTPVKEAA.

13-16 (SGNI) provides a ligand contact to NAD(+). C132 acts as the Acyl-thioester intermediate in catalysis. NAD(+) is bound by residues 163–171 (SIGPGTRAN) and N274.

It belongs to the acetaldehyde dehydrogenase family.

The enzyme catalyses acetaldehyde + NAD(+) + CoA = acetyl-CoA + NADH + H(+). The polypeptide is Acetaldehyde dehydrogenase 2 (Methylibium petroleiphilum (strain ATCC BAA-1232 / LMG 22953 / PM1)).